Here is a 687-residue protein sequence, read N- to C-terminus: Putative metabolite transport protein YDL199C (687 aa).

The segment at 1–22 (MKPPLNMSRSNKPLTQEANSSA) is disordered. Residues 1–122 (MKPPLNMSRS…RHSSRVLRTS (122 aa)) are Extracellular-facing. Polar residues predominate over residues 7 to 22 (MSRSNKPLTQEANSSA). A Phosphoserine modification is found at Ser90. The chain crosses the membrane as a helical span at residues 123-143 (FISFVVLVSSLSGLDQGLISG). Residues 144–164 (NVMTLSFQKYFHYPLTSPLGN) lie on the Cytoplasmic side of the membrane. The chain crosses the membrane as a helical span at residues 165–185 (IVSIVNLGAFMASLFVYSGIL). Residues 186–192 (EPCSRKK) lie on the Extracellular side of the membrane. Residues 193 to 213 (MLQISTMIYSLGAIVQVLALN) traverse the membrane as a helical segment. The Cytoplasmic portion of the chain corresponds to 214–216 (QWC). A helical transmembrane segment spans residues 217 to 237 (LLLGRFLLGVGMGFAFSMVII). The Extracellular portion of the chain corresponds to 238 to 251 (YQFEFPLPCIRKRT). Residues 252–272 (LISIQCVSSVIAYSFGIWINC) traverse the membrane as a helical segment. Residues 273-283 (AFRYLGFAWRY) lie on the Cytoplasmic side of the membrane. A helical membrane pass occupies residues 284–304 (PLSTHVALGIILNLMSFYLIL). Over 305–410 (ESPSWLLKQK…MGRGERKSIY (106 aa)) the chain is Extracellular. A helical membrane pass occupies residues 411–431 (LTGLNALIYSIVILAYVPLVL). Topologically, residues 432–439 (RKRKEKTN) are cytoplasmic. Residues 440–460 (VLLGSIVMCALLFTISFTDWF) traverse the membrane as a helical segment. Over 461–469 (PKSTTRYIS) the chain is Extracellular. Residues 470 to 490 (ILFAVFLFTHFISWDSIGWVM) form a helical membrane-spanning segment. At 491 to 500 (TIELLPHLSQ) the chain is on the cytoplasmic side. A helical membrane pass occupies residues 501–521 (APVILLVSNFYWIFKWFVSLI). The Extracellular segment spans residues 522-533 (TPILIDRLSWKF). The chain crosses the membrane as a helical span at residues 534 to 554 (YLIPSLSSFISIIFVLKIFPI). At 555-687 (ETRDERLDSD…QNSPGDMAVA (133 aa)) the chain is on the cytoplasmic side. Disordered regions lie at residues 561–587 (LDSD…SEFS) and 654–687 (SFHN…MAVA). Over residues 660–673 (DPNISDNIAANKPS) the composition is skewed to polar residues.

This sequence belongs to the major facilitator superfamily. Sugar transporter (TC 2.A.1.1) family.

It localises to the membrane. This chain is Putative metabolite transport protein YDL199C, found in Saccharomyces cerevisiae (strain ATCC 204508 / S288c) (Baker's yeast).